Consider the following 541-residue polypeptide: Presenilin homolog (541 aa).

2 stretches are compositionally biased toward polar residues: residues Met-1–Leu-14 and Asn-43–Gln-52. Disordered regions lie at residues Met-1–Gln-52 and Cys-69–Glu-92. At Met-1–Lys-106 the chain is on the cytoplasmic side. The helical transmembrane segment at Leu-107–Phe-127 threads the bilayer. At Tyr-128–Ala-154 the chain is on the lumenal side. A glycan (N-linked (GlcNAc...) asparagine) is linked at Asn-129. A helical membrane pass occupies residues Leu-155–Leu-175. The Cytoplasmic segment spans residues Tyr-176 to Arg-182. Residues Ile-183–Tyr-203 form a helical membrane-spanning segment. Residues Leu-204–Asp-216 lie on the Lumenal side of the membrane. A helical membrane pass occupies residues Tyr-217–Trp-237. At Gln-238–Arg-242 the chain is on the cytoplasmic side. A helical transmembrane segment spans residues Leu-243–Leu-263. The Lumenal segment spans residues Pro-264–Glu-265. A helical transmembrane segment spans residues Trp-266–Pro-286. The active site involves Asp-279. At Arg-287–Arg-453 the chain is on the cytoplasmic side. The interval Asn-320–Thr-481 is interaction with Mettl2. Residues Ser-327–Ser-350 are compositionally biased toward low complexity. 2 disordered regions span residues Ser-327–Val-379 and Glu-421–Gly-449. Composition is skewed to polar residues over residues Gly-361–Arg-370 and Glu-421–Asp-443. Residues Gly-454 to Ser-474 form a helical membrane-spanning segment. Asp-461 is a catalytic residue. The Lumenal segment spans residues Tyr-475–Thr-481. A helical transmembrane segment spans residues Ile-482–Trp-502. At Arg-503–Leu-506 the chain is on the cytoplasmic side. Positions Pro-507 to Leu-509 match the PAL motif. An intramembrane region (helical) is located at residues Pro-507–Val-527. Residues Lys-528–Ile-541 are Cytoplasmic-facing.

Belongs to the peptidase A22A family. As to quaternary structure, homodimer. Component of the gamma-secretase complex, a complex composed of a presenilin (Psn) homodimer, nicastrin (Nct), Aph-1 and Pen-2. Interacts with Mettl2. Isoform 2 shows a better interaction with Mettl2 than isoform 1. Post-translationally, cleaved. The cleavage, which probably takes place between the 6th and the 7th transmembrane regions, may be required for activation of the gamma-secretase activity. In terms of tissue distribution, maternally expressed in nurse and follicle cells. In early embryos, expressed in all or most cells and later increases in CNS and epidermal tissues. In larvae, expression is seen in all imaginal disks, brain and optic lobes. In pupae, expression is seen in eye disk and brain.

It is found in the endoplasmic reticulum membrane. It localises to the golgi apparatus membrane. Probable catalytic subunit of the gamma-secretase complex, an endoprotease complex that catalyzes the intramembrane cleavage of integral membrane proteins such as Notch receptor. Required for S3 cleavage of Notch, which releases activated Notch protein from the cell membrane. Involved in the patterning of the optic lobes. This is Presenilin homolog (Psn) from Drosophila melanogaster (Fruit fly).